The chain runs to 504 residues: MFS antiporter QDR2 (504 aa).

The segment covering 1–14 (MLSTTQSVTEPTEV) has biased composition (polar residues). The tract at residues 1–23 (MLSTTQSVTEPTEVTSKKVEDIE) is disordered. Residues 1-41 (MLSTTQSVTEPTEVTSKKVEDIEKENDEETPYSIFTSYDRL) are Cytoplasmic-facing. The chain crosses the membrane as a helical span at residues 42–62 (VLIVILSLIGFWSTISSPIYF). Over 63–75 (PALPTLTSYFHTS) the chain is Extracellular. Residues 76-96 (SSIMNISVVAYLIFQGIAPTI) form a helical membrane-spanning segment. Over 97 to 106 (SSNLADTFGR) the chain is Cytoplasmic. A helical membrane pass occupies residues 107–129 (RPVILASIIVFCASCVAISQTNV). Topologically, residues 130-132 (YWL) are extracellular. Residues 133–155 (LAVLRCIQAAGIAAVISISSGVA) traverse the membrane as a helical segment. Topologically, residues 156–169 (GDVCTRANRGSMVG) are cytoplasmic. The chain crosses the membrane as a helical span at residues 170 to 190 (AVAGLQLVGNGIGGLVGAALI). The Extracellular portion of the chain corresponds to 191–198 (SSFNSWRS). A helical transmembrane segment spans residues 199 to 219 (IFIFLTIGGGVTFILAIFILP). At 220-278 (ETSRKLVGNGSVVPKNILNKSPYIYLPHFKKRMNNDITTIVPATRFDLLGPLKIFFQKN) the chain is on the cytoplasmic side. The chain crosses the membrane as a helical span at residues 279 to 299 (VFCTLLPVGIHFAAWTMVLTS). The Extracellular portion of the chain corresponds to 300–311 (LSTELESRYHYS). A helical membrane pass occupies residues 312 to 332 (VMHVGLIYLPQGIACIAGSLV). Topologically, residues 333-370 (VGKSLDWYYRYRKTIYDQEVECLPLDERPQFNIVATRL) are cytoplasmic. A helical transmembrane segment spans residues 371-391 (TLSVVPALLMIIGLVIFGWCI). Residues 392–396 (QYKRH) are Extracellular-facing. Residues 397-417 (IISIIISTILVSFSASVFIAI) form a helical membrane-spanning segment. At 418-438 (CTTMLVDLYPNNGSGSTSCLN) the chain is on the cytoplasmic side. A helical transmembrane segment spans residues 439–456 (LMRCWLAALGAGVLDSMI). Residues 457–460 (NAMN) are Extracellular-facing. A helical transmembrane segment spans residues 461-483 (VGGTYTVVAGFCILFDLALIYVL). At 484–504 (HNAKKKFSNSGPTTTKSPPKQ) the chain is on the cytoplasmic side.

The protein belongs to the major facilitator superfamily. CAR1 family.

Its subcellular location is the cell membrane. In terms of biological role, MFS antiporter that does not display functional linkage as drug transporter and performs functions that significantly affect biofilm development and virulence. No substrate for transport has been identified yet, but plays an important role in the growth in the host. This Candida albicans (strain SC5314 / ATCC MYA-2876) (Yeast) protein is MFS antiporter QDR2 (QDR2).